Here is a 149-residue protein sequence, read N- to C-terminus: MHCPFCSENDTKVIDSRLVADGHQVRRRRQCLACNERFTTFETAELLMPKVIKSNGNREPFNEDKMVGGIQRALEKRPVSADAIELAISMIKSKLRATGEREVPSKMIGNLVMEQLKHLDKVAYIRFASVYRSFEDIREFGEEIARLED.

The segment at 3 to 34 (CPFCSENDTKVIDSRLVADGHQVRRRRQCLAC) is a zinc-finger region. Residues 49–139 (PKVIKSNGNR…VYRSFEDIRE (91 aa)) enclose the ATP-cone domain.

It belongs to the NrdR family. Zn(2+) serves as cofactor.

In terms of biological role, negatively regulates transcription of bacterial ribonucleotide reductase nrd genes and operons by binding to NrdR-boxes. In Vibrio vulnificus (strain YJ016), this protein is Transcriptional repressor NrdR.